The chain runs to 488 residues: 7,8-epoxymelianol synthase CYP88A51 (488 aa).

The chain crosses the membrane as a helical span at residues 4 to 24 (NFLWPMLAMFLGSLVVMFGFL). C436 is a binding site for heme.

Belongs to the cytochrome P450 family. Heme serves as cofactor. Accumulates in mature fruits and in juice vesicles.

It is found in the membrane. The catalysed reaction is melianol + reduced [NADPH--hemoprotein reductase] + O2 = 7,8-epoxymelianol + oxidized [NADPH--hemoprotein reductase] + H2O + H(+). It functions in the pathway secondary metabolite biosynthesis; terpenoid biosynthesis. Functionally, monooxygenase involved in the biosynthesis of limonoids triterpene natural products such as limonin, a compound with insecticidal activity responsible for the bitter taste in citrus. Catalyzes the epoxidation of melianol to produce 7,8-epoxymelianol. In Citrus sinensis (Sweet orange), this protein is 7,8-epoxymelianol synthase CYP88A51.